The sequence spans 307 residues: uncharacterized protein (307 aa).

In terms of domain architecture, EAL spans 54 to 307 (RHYLSTSMRV…KALPVDFFRE (254 aa)). 2 helical membrane-spanning segments follow: residues 158 to 178 (PGFL…AHAL) and 203 to 223 (ALGV…LAYL).

It is found in the cell membrane. This is an uncharacterized protein from Mycobacterium tuberculosis (strain CDC 1551 / Oshkosh).